Reading from the N-terminus, the 184-residue chain is Phosphorelay intermediate protein YPD1 (184 aa).

In terms of domain architecture, HPt spans 30–125 (EEGFSKSLVE…SAENVAVNDG (96 aa)). The residue at position 69 (His-69) is a Phosphohistidine. Residues 120–152 (VAVNDGETNPENGSNGNETSNNKTNTSNIPDES) form a disordered region. Over residues 125–147 (GETNPENGSNGNETSNNKTNTSN) the composition is skewed to low complexity.

It belongs to the YPD1 family.

Its subcellular location is the cytoplasm. The protein resides in the nucleus. Functionally, phosphorelay intermediate protein that is part of the bifurcated SLN1-YPD1-SKN7/SSK1 two-component regulatory system, which controls activity of the HOG1 pathway and gene expression in response to oxidative stress and probably to changes in the osmolarity of the extracellular environment. Catalyzes the phosphoryl group transfer from the membrane-bound histidine kinase SLN1 to two distinct response regulators SSK1 and SKN7. The protein is Phosphorelay intermediate protein YPD1 (YPD1) of Candida albicans (strain SC5314 / ATCC MYA-2876) (Yeast).